We begin with the raw amino-acid sequence, 116 residues long: Large ribosomal subunit protein bL19 (116 aa).

The protein belongs to the bacterial ribosomal protein bL19 family.

Its function is as follows. This protein is located at the 30S-50S ribosomal subunit interface and may play a role in the structure and function of the aminoacyl-tRNA binding site. The polypeptide is Large ribosomal subunit protein bL19 (Blochmanniella pennsylvanica (strain BPEN)).